The following is a 381-amino-acid chain: Creatine kinase B-type (381 aa).

S4 carries the post-translational modification Phosphoserine. The Phosphagen kinase N-terminal domain occupies 11-98; sequence KLRFPAEDEF…FDPIIEERHG (88 aa). The residue at position 35 (T35) is a Phosphothreonine. Residue K45 forms a Glycyl lysine isopeptide (Lys-Gly) (interchain with G-Cter in ubiquitin) linkage. V72 is a binding site for creatine. A compositionally biased stretch (basic and acidic residues) spans 96–110; sequence RHGGYQPSDEHKTDL. The disordered stretch occupies residues 96 to 123; the sequence is RHGGYQPSDEHKTDLNPDNLQGGDDLDP. A Glycyl lysine isopeptide (Lys-Gly) (interchain with G-Cter in ubiquitin) cross-link involves residue K107. Y125 bears the Phosphotyrosine mark. One can recognise a Phosphagen kinase C-terminal domain in the interval 125–367; sequence YVLSSRVRTG…KLLIEMEQRL (243 aa). Residues 128 to 132, R130, R132, and H191 each bind ATP; that span reads SSRVR. Residues 130–138 are internal MTS-like signal; sequence RVRTGRSIR. Position 199 is a phosphoserine (S199). Position 232 (E232) interacts with creatine. R236 lines the ATP pocket. Y269 carries the 3'-nitrotyrosine modification. S285 serves as a coordination point for creatine. ATP is bound at residue R292. S309 is subject to Phosphoserine. Residues R320, 320 to 325, and D335 contribute to the ATP site; that span reads RGTGGV. Position 322 is a phosphothreonine (T322). K381 is covalently cross-linked (Glycyl lysine isopeptide (Lys-Gly) (interchain with G-Cter in ubiquitin)).

It belongs to the ATP:guanido phosphotransferase family. Dimer of identical or non-identical chains, which can be either B (brain type) or M (muscle type). With MM being the major form in skeletal muscle and myocardium, MB existing in myocardium, and BB existing in many tissues, especially brain. Interacts with SLC12A6 (via C-terminus); the interaction may be required for SLC12A6 potassium-chloride cotransport activity. Post-translationally, ubiquitinated by the ECS(ASB9) complex, leading to its degradation by the proteasome. In terms of tissue distribution, expressed in hippocampus and corpus callosum (at protein level).

It is found in the cytoplasm. The protein resides in the cytosol. Its subcellular location is the mitochondrion. The protein localises to the cell membrane. The catalysed reaction is creatine + ATP = N-phosphocreatine + ADP + H(+). Functionally, reversibly catalyzes the transfer of phosphate between ATP and various phosphogens (e.g. creatine phosphate). Creatine kinase isoenzymes play a central role in energy transduction in tissues with large, fluctuating energy demands, such as skeletal muscle, heart, brain and spermatozoa. Acts as a key regulator of adaptive thermogenesis as part of the futile creatine cycle: localizes to the mitochondria of thermogenic fat cells and acts by mediating phosphorylation of creatine to initiate a futile cycle of creatine phosphorylation and dephosphorylation. During the futile creatine cycle, creatine and N-phosphocreatine are in a futile cycle, which dissipates the high energy charge of N-phosphocreatine as heat without performing any mechanical or chemical work. This is Creatine kinase B-type from Mus musculus (Mouse).